The following is a 164-amino-acid chain: S-ribosylhomocysteine lyase (164 aa).

Positions 54, 58, and 128 each coordinate Fe cation.

It belongs to the LuxS family. Homodimer. Fe cation serves as cofactor.

It carries out the reaction S-(5-deoxy-D-ribos-5-yl)-L-homocysteine = (S)-4,5-dihydroxypentane-2,3-dione + L-homocysteine. In terms of biological role, involved in the synthesis of autoinducer 2 (AI-2) which is secreted by bacteria and is used to communicate both the cell density and the metabolic potential of the environment. The regulation of gene expression in response to changes in cell density is called quorum sensing. Catalyzes the transformation of S-ribosylhomocysteine (RHC) to homocysteine (HC) and 4,5-dihydroxy-2,3-pentadione (DPD). This is S-ribosylhomocysteine lyase from Campylobacter jejuni subsp. jejuni serotype O:2 (strain ATCC 700819 / NCTC 11168).